We begin with the raw amino-acid sequence, 195 residues long: MKEIHVILSGGLSRRFGEPKAFARWKGKPLYQWCKQALGDDVLILSRPGLTERFIELGEKAVLEDIEPYRGKGPLAGMYTAMERAEGECYIFSACDTPLVRQETISALKRQLTPADDAVVPVADGRAQPLVAVYHRRVKSVLHEQLQQNELKISSFLDRIRVKYIEADAVGAEPWEFINVNKKSDLEEIEPFFPG.

Residues 8 to 10, Lys20, Asp65, and Asp96 each bind GTP; that span reads LSG. Asp96 serves as a coordination point for Mg(2+).

The protein belongs to the MobA family. Mg(2+) is required as a cofactor.

The protein resides in the cytoplasm. It carries out the reaction Mo-molybdopterin + GTP + H(+) = Mo-molybdopterin guanine dinucleotide + diphosphate. Its function is as follows. Transfers a GMP moiety from GTP to Mo-molybdopterin (Mo-MPT) cofactor (Moco or molybdenum cofactor) to form Mo-molybdopterin guanine dinucleotide (Mo-MGD) cofactor. The protein is Probable molybdenum cofactor guanylyltransferase of Bacillus licheniformis (strain ATCC 14580 / DSM 13 / JCM 2505 / CCUG 7422 / NBRC 12200 / NCIMB 9375 / NCTC 10341 / NRRL NRS-1264 / Gibson 46).